Consider the following 71-residue polypeptide: Putative antitoxin VapB14 (71 aa).

Putative antitoxin component of a possible type II toxin-antitoxin (TA) system. The cognate toxin is VapB14. The protein is Putative antitoxin VapB14 (vapB14) of Mycobacterium tuberculosis (strain ATCC 25618 / H37Rv).